The primary structure comprises 630 residues: Sodium-dependent serotonin transporter (630 aa).

Topologically, residues 1–87 (METTPLNSQK…ERETWGKKVD (87 aa)) are cytoplasmic. Residues 31-59 (VPTPGDKVESGQISNGYSAVPSPGAGDDT) are disordered. Tyrosine 47 is modified (phosphotyrosine). A helical membrane pass occupies residues 88–112 (FLLSVIGYAVDLGNVWRFPYICYQN). Residues glycine 94, alanine 96, valine 97, aspartate 98, and asparagine 101 each coordinate Na(+). Aspartate 98 provides a ligand contact to serotonin. Over 113–115 (GGG) the chain is Extracellular. The helical transmembrane segment at 116 to 135 (AFLIPYTIMAIFGGIPLFYM) threads the bilayer. The Cytoplasmic portion of the chain corresponds to 136–160 (ELALGQYHRNGCISIWRKICPIFKG). Residue tyrosine 142 is modified to Phosphotyrosine. The helical transmembrane segment at 161–186 (IGYAICIIAFYIASYYNTIMAWALYY) threads the bilayer. Residues 187–252 (LISSFTDQLP…KGLQDLGGIS (66 aa)) lie on the Extracellular side of the membrane. Cysteine 200 and cysteine 209 form a disulfide bridge. Residues asparagine 208 and asparagine 217 are each glycosylated (N-linked (GlcNAc...) asparagine). A helical membrane pass occupies residues 253–271 (WQLALCIMLIFTVIYFSIW). Residues 272–277 (KGVKTS) are Cytoplasmic-facing. Threonine 276 is subject to Phosphothreonine. Residues 278-297 (GKVVWVTATFPYIILSVLLV) traverse the membrane as a helical segment. The Extracellular segment spans residues 298 to 324 (RGATLPGAWRGVLFYLKPNWQKLLETG). The helical transmembrane segment at 325–347 (VWIDAAAQIFFSLGPGFGVLLAF) threads the bilayer. Serine 336 is a Na(+) binding site. Residues 348 to 360 (ASYNKFNNNCYQD) lie on the Cytoplasmic side of the membrane. Residues 361–380 (ALVTSVVNCMTSFVSGFVIF) form a helical membrane-spanning segment. Asparagine 368 is a Na(+) binding site. The Extracellular portion of the chain corresponds to 381–421 (TVLGYMAEMRNEDVSEVAKDAGPSLLFITYAEAIANMPAST). A helical membrane pass occupies residues 422–443 (FFAIIFFLMLITLGLDSTFAGL). Na(+) contacts are provided by leucine 434, aspartate 437, and serine 438. Position 439 (threonine 439) interacts with serotonin. Topologically, residues 444-463 (EGVITAVLDEFPHIWAKRRE) are cytoplasmic. The helical transmembrane segment at 464–483 (WFVLAVVITCFFGSLVTLTF) threads the bilayer. Residues 484–494 (GGAYVVKLLEE) are Extracellular-facing. Residues glutamate 494 and tyrosine 495 each coordinate serotonin. Residues 495–516 (YATGPAVLTVALIEAVAVSWFY) traverse the membrane as a helical segment. Residues 517 to 538 (GITQFCRDVKEMLGFSPGWFWR) are Cytoplasmic-facing. The chain crosses the membrane as a helical span at residues 539–558 (ICWVAISPLFLLFIICSFLM). Serotonin contacts are provided by phenylalanine 556 and serine 559. Residues 559-574 (SPPQLRLFQYNYPHWS) are Extracellular-facing. Residues 575 to 595 (IILGYCIGTSSFVCIPTYIAY) form a helical membrane-spanning segment. Residues 596–630 (RLISTPGTFKERIIKSITPETPTEIPCGDVRLNAV) lie on the Cytoplasmic side of the membrane. The interaction with RAB4A stretch occupies residues 616–624 (TPTEIPCGD).

Belongs to the sodium:neurotransmitter symporter (SNF) (TC 2.A.22) family. SLC6A4 subfamily. As to quaternary structure, monomer or homooligomer. Interacts (via C-terminus) with SCAMP2; the interaction is direct and retains transporter molecules intracellularly. Interacts with filamentous actin and STX1A. Interacts (via the N-terminus) with STX1A (via the H3 domain); this interaction regulates SLC4A6 channel conductance. Interacts with SEC23A, SEC24C and PATJ. Interacts with NOS1; the interaction may diminish the cell surface localization of SERT in the brain and, correspondingly, reduce serotonin reuptake. Interacts with TGFB1I1. Interacts with ITGAV:ITGB3. Interacts (via C-terminus) with ITGB3; this interaction regulates SLC6A4 trafficking. Post-translationally, phosphorylation at Thr-276 increases 5-HT uptake and is required for cGMP-mediated SERT regulation.

It localises to the cell membrane. It is found in the endomembrane system. The protein localises to the endosome membrane. The protein resides in the synapse. Its subcellular location is the cell junction. It localises to the focal adhesion. It is found in the cell projection. The protein localises to the neuron projection. The enzyme catalyses serotonin(out) + K(+)(in) + Na(+)(out) + H(+)(in) = serotonin(in) + K(+)(out) + Na(+)(in) + H(+)(out). Its function is as follows. Serotonin transporter that cotransports serotonin with one Na(+) ion in exchange for one K(+) ion and possibly one proton in an overall electroneutral transport cycle. Transports serotonin across the plasma membrane from the extracellular compartment to the cytosol thus limiting serotonin intercellular signaling. Essential for serotonin homeostasis in the central nervous system. In the developing somatosensory cortex, acts in glutamatergic neurons to control serotonin uptake and its trophic functions accounting for proper spatial organization of cortical neurons and elaboration of sensory circuits. In the mature cortex, acts primarily in brainstem raphe neurons to mediate serotonin uptake from the synaptic cleft back into the pre-synaptic terminal thus terminating serotonin signaling at the synapse. Modulates mucosal serotonin levels in the gastrointestinal tract through uptake and clearance of serotonin in enterocytes. Required for enteric neurogenesis and gastrointestinal reflexes. Regulates blood serotonin levels by ensuring rapid high affinity uptake of serotonin from plasma to platelets, where it is further stored in dense granules via vesicular monoamine transporters and then released upon stimulation. Mechanistically, the transport cycle starts with an outward-open conformation having Na1(+) and Cl(-) sites occupied. The binding of a second extracellular Na2(+) ion and serotonin substrate leads to structural changes to outward-occluded to inward-occluded to inward-open, where the Na2(+) ion and serotonin are released into the cytosol. Binding of intracellular K(+) ion induces conformational transitions to inward-occluded to outward-open and completes the cycle by releasing K(+) possibly together with a proton bound to Asp-98 into the extracellular compartment. Na1(+) and Cl(-) ions remain bound throughout the transport cycle. Additionally, displays serotonin-induced channel-like conductance for monovalent cations, mainly Na(+) ions. The channel activity is uncoupled from the transport cycle and may contribute to the membrane resting potential or excitability. The sequence is that of Sodium-dependent serotonin transporter (SLC6A4) from Macaca mulatta (Rhesus macaque).